A 290-amino-acid chain; its full sequence is ATP synthase gamma chain (290 aa).

Belongs to the ATPase gamma chain family. In terms of assembly, F-type ATPases have 2 components, CF(1) - the catalytic core - and CF(0) - the membrane proton channel. CF(1) has five subunits: alpha(3), beta(3), gamma(1), delta(1), epsilon(1). CF(0) has three main subunits: a, b and c.

It is found in the cell inner membrane. In terms of biological role, produces ATP from ADP in the presence of a proton gradient across the membrane. The gamma chain is believed to be important in regulating ATPase activity and the flow of protons through the CF(0) complex. This chain is ATP synthase gamma chain, found in Anaeromyxobacter sp. (strain K).